We begin with the raw amino-acid sequence, 219 residues long: Arginine transport system permease protein ArtQ (219 aa).

The next 5 membrane-spanning stretches (helical) occupy residues Leu-19–Val-39, Phe-51–Ile-73, Gln-88–Ile-108, Ala-149–Leu-169, and Leu-187–Ile-207. Residues Leu-19–Gly-208 form the ABC transmembrane type-1 domain.

It belongs to the binding-protein-dependent transport system permease family. HisMQ subfamily.

It localises to the cell membrane. Functionally, part of a binding-protein-dependent transport system for arginine. Probably responsible for the translocation of the substrate across the membrane. The sequence is that of Arginine transport system permease protein ArtQ (artQ) from Bacillus subtilis (strain 168).